We begin with the raw amino-acid sequence, 556 residues long: 2-succinyl-5-enolpyruvyl-6-hydroxy-3-cyclohexene-1-carboxylate synthase (556 aa).

This sequence belongs to the TPP enzyme family. MenD subfamily. As to quaternary structure, homodimer. Mg(2+) is required as a cofactor. It depends on Mn(2+) as a cofactor. Thiamine diphosphate serves as cofactor.

The enzyme catalyses isochorismate + 2-oxoglutarate + H(+) = 5-enolpyruvoyl-6-hydroxy-2-succinyl-cyclohex-3-ene-1-carboxylate + CO2. The protein operates within quinol/quinone metabolism; 1,4-dihydroxy-2-naphthoate biosynthesis; 1,4-dihydroxy-2-naphthoate from chorismate: step 2/7. It functions in the pathway quinol/quinone metabolism; menaquinone biosynthesis. In terms of biological role, catalyzes the thiamine diphosphate-dependent decarboxylation of 2-oxoglutarate and the subsequent addition of the resulting succinic semialdehyde-thiamine pyrophosphate anion to isochorismate to yield 2-succinyl-5-enolpyruvyl-6-hydroxy-3-cyclohexene-1-carboxylate (SEPHCHC). In Escherichia coli O45:K1 (strain S88 / ExPEC), this protein is 2-succinyl-5-enolpyruvyl-6-hydroxy-3-cyclohexene-1-carboxylate synthase.